The chain runs to 306 residues: GTP cyclohydrolase FolE2 (306 aa).

It belongs to the GTP cyclohydrolase IV family.

It carries out the reaction GTP + H2O = 7,8-dihydroneopterin 3'-triphosphate + formate + H(+). The protein operates within cofactor biosynthesis; 7,8-dihydroneopterin triphosphate biosynthesis; 7,8-dihydroneopterin triphosphate from GTP: step 1/1. In terms of biological role, converts GTP to 7,8-dihydroneopterin triphosphate. In Xanthomonas oryzae pv. oryzae (strain MAFF 311018), this protein is GTP cyclohydrolase FolE2.